Reading from the N-terminus, the 279-residue chain is Shikimate dehydrogenase (NADP(+)) (279 aa).

Shikimate is bound by residues 14 to 16 (SLS) and Thr62. Lys66 acts as the Proton acceptor in catalysis. Residues Asn87 and Asp103 each contribute to the shikimate site. NADP(+) is bound by residues 127-131 (GAGGA), 151-156 (NRTKAK), and Met215. A shikimate-binding site is contributed by Tyr217. Gly239 is a binding site for NADP(+).

Belongs to the shikimate dehydrogenase family. In terms of assembly, homodimer.

It carries out the reaction shikimate + NADP(+) = 3-dehydroshikimate + NADPH + H(+). Its pathway is metabolic intermediate biosynthesis; chorismate biosynthesis; chorismate from D-erythrose 4-phosphate and phosphoenolpyruvate: step 4/7. Its function is as follows. Involved in the biosynthesis of the chorismate, which leads to the biosynthesis of aromatic amino acids. Catalyzes the reversible NADPH linked reduction of 3-dehydroshikimate (DHSA) to yield shikimate (SA). In Alteromonas mediterranea (strain DSM 17117 / CIP 110805 / LMG 28347 / Deep ecotype), this protein is Shikimate dehydrogenase (NADP(+)).